We begin with the raw amino-acid sequence, 519 residues long: Putative ATP-dependent RNA helicase L396 (519 aa).

Residues Ile-110–Leu-258 form the Helicase ATP-binding domain. Position 123-130 (Met-123–Thr-130) interacts with ATP. A DEAH box motif is present at residues Asp-211 to His-214. A Helicase C-terminal domain is found at Tyr-317 to Tyr-457.

This sequence belongs to the DEAD box helicase family. DEAH subfamily.

The catalysed reaction is ATP + H2O = ADP + phosphate + H(+). The chain is Putative ATP-dependent RNA helicase L396 from Acanthamoeba polyphaga (Amoeba).